The following is a 360-amino-acid chain: Protein phosphatase 1L (360 aa).

Residues 1 to 25 (MIEDTMTLLSLLGRIMRYFLLRPET) are Extracellular-facing. Residues 26-42 (LFLLCISLALWSYFFHT) traverse the membrane as a helical segment. Residues 43–360 (DEVKTIVKSS…FRNSSKTEEQ (318 aa)) lie on the Cytoplasmic side of the membrane. One can recognise a PPM-type phosphatase domain in the interval 92 to 351 (NVAVYSIQGR…DNITVMVVKF (260 aa)). 4 residues coordinate Mn(2+): D128, G129, D302, and D342.

Belongs to the PP2C family. In terms of assembly, interacts with MAP3K7/TAK1. Interacts with MAP3K5. Mg(2+) is required as a cofactor. Mn(2+) serves as cofactor. As to expression, ubiquitous. Highly expressed in heart, placenta, lung, liver, kidney and pancreas.

Its subcellular location is the membrane. The catalysed reaction is O-phospho-L-seryl-[protein] + H2O = L-seryl-[protein] + phosphate. It carries out the reaction O-phospho-L-threonyl-[protein] + H2O = L-threonyl-[protein] + phosphate. Acts as a suppressor of the SAPK signaling pathways by associating with and dephosphorylating MAP3K7/TAK1 and MAP3K5, and by attenuating the association between MAP3K7/TAK1 and MAP2K4 or MAP2K6. The polypeptide is Protein phosphatase 1L (PPM1L) (Homo sapiens (Human)).